A 340-amino-acid chain; its full sequence is Phosphoribosylformylglycinamidine cyclo-ligase (340 aa).

Belongs to the AIR synthase family.

The protein localises to the cytoplasm. The enzyme catalyses 2-formamido-N(1)-(5-O-phospho-beta-D-ribosyl)acetamidine + ATP = 5-amino-1-(5-phospho-beta-D-ribosyl)imidazole + ADP + phosphate + H(+). The protein operates within purine metabolism; IMP biosynthesis via de novo pathway; 5-amino-1-(5-phospho-D-ribosyl)imidazole from N(2)-formyl-N(1)-(5-phospho-D-ribosyl)glycinamide: step 2/2. The sequence is that of Phosphoribosylformylglycinamidine cyclo-ligase from Streptococcus pneumoniae (strain Taiwan19F-14).